Consider the following 591-residue polypeptide: Aspartate--tRNA(Asp/Asn) ligase (591 aa).

An L-aspartate-binding site is contributed by Glu176. An aspartate region spans residues 200–203 (QLFK). Arg222 contacts L-aspartate. ATP contacts are provided by residues 222–224 (RDE) and Gln231. His450 contacts L-aspartate. Residue Glu484 coordinates ATP. Position 491 (Arg491) interacts with L-aspartate. 536–539 (GLDR) contacts ATP.

It belongs to the class-II aminoacyl-tRNA synthetase family. Type 1 subfamily. In terms of assembly, homodimer.

The protein localises to the cytoplasm. The enzyme catalyses tRNA(Asx) + L-aspartate + ATP = L-aspartyl-tRNA(Asx) + AMP + diphosphate. In terms of biological role, aspartyl-tRNA synthetase with relaxed tRNA specificity since it is able to aspartylate not only its cognate tRNA(Asp) but also tRNA(Asn). Reaction proceeds in two steps: L-aspartate is first activated by ATP to form Asp-AMP and then transferred to the acceptor end of tRNA(Asp/Asn). This Bacillus cereus (strain AH187) protein is Aspartate--tRNA(Asp/Asn) ligase.